The sequence spans 611 residues: Creatine transporter (611 aa).

Residues 45-65 (FIMSCVGFAVGLGNVWRFPYL) traverse the membrane as a helical segment. The Extracellular segment spans residues 66 to 71 (CYKNGG). A helical membrane pass occupies residues 72–92 (GVFLIPYLLVAVFGGIPIFFL). At 93 to 122 (EISLGQFMKAGGINAWNIAPLFKGLGYASM) the chain is on the cytoplasmic side. Residues 123–143 (VIVFFCNTYYILVLTWSSFYL) traverse the membrane as a helical segment. Over 144-207 (VQSFSSPLPW…LSSGLGDVGE (64 aa)) the chain is Extracellular. N157 and N171 each carry an N-linked (GlcNAc...) asparagine glycan. The helical transmembrane segment at 208–228 (IGWELTLCLTATWMLVYFCIW) threads the bilayer. The Cytoplasmic segment spans residues 229–246 (KGVKTSGKVVYVTATFPY). Residues 247-267 (IILVILLVRGVTLHGAVQGIV) traverse the membrane as a helical segment. Topologically, residues 268–281 (YYLQPDWGKLGEAQ) are extracellular. The helical transmembrane segment at 282–302 (VWIDAGTQIFFSYAIGLGTLT) threads the bilayer. At 303–318 (ALGSYNQLHNDCYKDA) the chain is on the cytoplasmic side. The helical transmembrane segment at 319–339 (FILSLVNSATSFFAGLVVFSI) threads the bilayer. Residues 340 to 371 (LGFMAVEEGVDISVVAESGPGLAFIAYPKAVT) lie on the Extracellular side of the membrane. Residues 372–392 (LMPFPQVWAVLFFIMLLCLGL) form a helical membrane-spanning segment. The Cytoplasmic portion of the chain corresponds to 393–421 (GSQFVGVEGFVTAILDLWPSKFSFRYLRE). The chain crosses the membrane as a helical span at residues 422-442 (VVVAMVICLSFLIDLSMITEG). The Extracellular portion of the chain corresponds to 443-456 (GMYIFQIFDYYSAS). A helical membrane pass occupies residues 457–477 (GTTLLWTAFWECVAVAWVYGG). At 478-497 (DRYLDDLAWMLGYRPWALVK) the chain is on the cytoplasmic side. The helical transmembrane segment at 498-518 (WCWSVITPLVCMGIFTFHLVN) threads the bilayer. At 519–537 (YKPLTYNKTYTYPWWGEAI) the chain is on the extracellular side. N525 is a glycosylation site (N-linked (GlcNAc...) asparagine). Residues 538–558 (GWCLALASMLCVPTTVLYSLS) form a helical membrane-spanning segment. Residues 559–611 (RGRGSLKERWRKLTTPVWASHHLAYKMAGAKINQPCEGVVSCEEKVVIFESVL) are Cytoplasmic-facing.

It belongs to the sodium:neurotransmitter symporter (SNF) (TC 2.A.22) family.

The protein resides in the membrane. In terms of biological role, required for the uptake of creatine. The chain is Creatine transporter from Torpedo marmorata (Marbled electric ray).